We begin with the raw amino-acid sequence, 403 residues long: S-adenosylmethionine synthase (403 aa).

An ATP-binding site is contributed by His-16. Asp-18 is a Mg(2+) binding site. A K(+)-binding site is contributed by Glu-44. Glu-57 and Gln-100 together coordinate L-methionine. Positions 100 to 110 are flexible loop; the sequence is QSSDIAQGVDR. ATP contacts are provided by residues 165-167, Asp-242, 248-249, Ala-265, and Lys-269; these read DAK and RK. Asp-242 contacts L-methionine. L-methionine is bound at residue Lys-273.

The protein belongs to the AdoMet synthase family. Homotetramer; dimer of dimers. Requires Mg(2+) as cofactor. K(+) is required as a cofactor.

Its subcellular location is the cytoplasm. It catalyses the reaction L-methionine + ATP + H2O = S-adenosyl-L-methionine + phosphate + diphosphate. The protein operates within amino-acid biosynthesis; S-adenosyl-L-methionine biosynthesis; S-adenosyl-L-methionine from L-methionine: step 1/1. Functionally, catalyzes the formation of S-adenosylmethionine (AdoMet) from methionine and ATP. The overall synthetic reaction is composed of two sequential steps, AdoMet formation and the subsequent tripolyphosphate hydrolysis which occurs prior to release of AdoMet from the enzyme. This Nitrosococcus oceani (strain ATCC 19707 / BCRC 17464 / JCM 30415 / NCIMB 11848 / C-107) protein is S-adenosylmethionine synthase.